A 129-amino-acid polypeptide reads, in one-letter code: MAATASLTTTAPSPPALLKASAPLLISFRPVSRHCKNLCIKTKATENDQSAKKHQKVKSILCQDCEGNGAIVCTKCEGNGVNSVDYFEGRFKAGSLCWLCRGKREILCGNCNGAGFLGGFLSTFDETAQ.

A chloroplast-targeting transit peptide spans 1–43; that stretch reads MAATASLTTTAPSPPALLKASAPLLISFRPVSRHCKNLCIKTK. A CR-type zinc finger spans residues 49–123; that stretch reads QSAKKHQKVK…AGFLGGFLST (75 aa). The Zn(2+) site is built by Cys-62, Cys-65, Asn-68, Cys-73, Cys-76, Cys-97, Cys-100, Glu-105, Cys-108, and Cys-111.

The protein belongs to the BSD2 chaperone family. Interacts with the RuBisCo large subunit (RbcL) assembled as an intermediate complex made of eight RbcL and eight BSD2 subunits. In terms of tissue distribution, expressed in shoot tissues, in both bundle sheath and mesophyll cells.

Its subcellular location is the plastid. The protein localises to the chloroplast stroma. Its function is as follows. Chloroplast chaperone required for RuBisCo complex biogenesis and translational regulation of the RuBisCo large subunit (RbcL). Stabilizes an end-state assembly intermediate of eight RbcL subunits until the small subunits (RBCSs) become available to produce a complete stable RuBisCo complex containing eight small and eight large subunits. Involved in the differentiation of bundle sheath cells, especially chloroplast structure. The polypeptide is Protein BUNDLE SHEATH DEFECTIVE 2, chloroplastic (Zea mays (Maize)).